The following is a 231-amino-acid chain: MAKLSKRQKLINEKVDSTKAYSIEEAVALLQELSKVKFSETVDAAINLGIDPRKSDQAVRGATSLPHGTGKDVRVAVFTQGANAEAAKEAGAEFVGMEDLAEQIKGGMMDFDVVIADPAAMRVVGMLGQVLGPRGLMPNPKTGTVTPDVVGAVKNAKAGQVRYRADKGGIIHGGIGKISFDANAIKENLEALISDLKKAKPASAKGIYVKRVSLSTTMGPGLTIDQSSLTA.

It belongs to the universal ribosomal protein uL1 family. Part of the 50S ribosomal subunit.

Functionally, binds directly to 23S rRNA. The L1 stalk is quite mobile in the ribosome, and is involved in E site tRNA release. Its function is as follows. Protein L1 is also a translational repressor protein, it controls the translation of the L11 operon by binding to its mRNA. This Saccharophagus degradans (strain 2-40 / ATCC 43961 / DSM 17024) protein is Large ribosomal subunit protein uL1.